The sequence spans 135 residues: Large ribosomal subunit protein bL17 (135 aa).

Belongs to the bacterial ribosomal protein bL17 family. As to quaternary structure, part of the 50S ribosomal subunit. Contacts protein L32.

This chain is Large ribosomal subunit protein bL17, found in Listeria welshimeri serovar 6b (strain ATCC 35897 / DSM 20650 / CCUG 15529 / CIP 8149 / NCTC 11857 / SLCC 5334 / V8).